A 483-amino-acid chain; its full sequence is MGFTVAIVGRPNVGKSTLFNRLVGRKLALVDDLPGVTRDRRIHDAKLYDLKFQVIDTAGLEEAANDSLEARMRAQTEAAIQEADVILFVVDAKNGLTPTDSTFAEVVRRSGKPVVLVANKAEARGAQSGMYDAFQLGLGEPCPISAEHGQGMPDLRDAIVELLGEERVFADEKEEETADEVFTPKAVGELIGDDIEDPDEEEIPAYDATKPLRIAIVGRPNAGKSTLINTMLGEDRLLTGPEAGITRDSISVDWEWRGRKIKLFDTAGLRRKSRVQEKLEKLSVADGLRAIRFAEVVIIVLDATIPFEKQDLQIADLIIREGRAPIIAFNKWDLIEDRQMVLADLYEKTARLLPQVRGLRAVPISGERGQGIDKLMENVVKTHEIWNRRVSTGRLNRWLAGVIAHQPPPAVSGRRLKVKYMTQVKTRPPGFVVSCSRPDAMPQSYVRYLINGLRETFDMPGVPIRLSLRTSDNPFAGRAKKKK.

EngA-type G domains lie at 3-167 and 212-387; these read FTVA…GEER and LRIA…EIWN. Residues 9 to 16, 56 to 60, 119 to 122, 218 to 225, 265 to 269, and 330 to 333 contribute to the GTP site; these read GRPNVGKS, DTAGL, NKAE, GRPNAGKS, and NKWD. Residues 388-472 form the KH-like domain; that stretch reads RRVSTGRLNR…PIRLSLRTSD (85 aa).

It belongs to the TRAFAC class TrmE-Era-EngA-EngB-Septin-like GTPase superfamily. EngA (Der) GTPase family. Associates with the 50S ribosomal subunit.

Functionally, GTPase that plays an essential role in the late steps of ribosome biogenesis. The polypeptide is GTPase Der (Brucella anthropi (strain ATCC 49188 / DSM 6882 / CCUG 24695 / JCM 21032 / LMG 3331 / NBRC 15819 / NCTC 12168 / Alc 37) (Ochrobactrum anthropi)).